Here is a 360-residue protein sequence, read N- to C-terminus: Cyclin-dependent kinase 10 (360 aa).

The Protein kinase domain maps to 39–323 (FEKLNRIGEG…SGDCLESSYF (285 aa)). ATP is bound by residues 45 to 53 (IGEGTYGIV) and Lys68. Asp163 (proton acceptor) is an active-site residue. Position 196 is a phosphothreonine (Thr196). The disordered stretch occupies residues 334 to 360 (LMPTFPHHRNKRAAPAAAEGQSKRCRP).

It belongs to the protein kinase superfamily. CMGC Ser/Thr protein kinase family. CDC2/CDKX subfamily. In terms of assembly, heterodimer with CCNQ, the interaction is required for kinase activity. Interacts with ETS2. Interacts with PRK2.

It is found in the cytoplasm. The protein localises to the cytoskeleton. It localises to the cilium basal body. It carries out the reaction L-seryl-[protein] + ATP = O-phospho-L-seryl-[protein] + ADP + H(+). The catalysed reaction is L-threonyl-[protein] + ATP = O-phospho-L-threonyl-[protein] + ADP + H(+). Functionally, cyclin-dependent kinase that phosphorylates the transcription factor ETS2 (in vitro) and positively controls its proteasomal degradation (in cells). Involved in the regulation of actin cytoskeleton organization through the phosphorylation of actin dynamics regulators such as PKN2. Is a negative regulator of ciliogenesis through phosphorylation of PKN2 and promotion of RhoA signaling. This Mus musculus (Mouse) protein is Cyclin-dependent kinase 10 (Cdk10).